The chain runs to 385 residues: 8-amino-7-oxononanoate synthase (385 aa).

R21 contacts substrate. 108-109 (GF) is a pyridoxal 5'-phosphate binding site. Substrate is bound at residue H133. 3 residues coordinate pyridoxal 5'-phosphate: S179, H207, and T233. N6-(pyridoxal phosphate)lysine is present on K236. T352 contributes to the substrate binding site.

This sequence belongs to the class-II pyridoxal-phosphate-dependent aminotransferase family. BioF subfamily. In terms of assembly, homodimer. It depends on pyridoxal 5'-phosphate as a cofactor.

The catalysed reaction is 6-carboxyhexanoyl-[ACP] + L-alanine + H(+) = (8S)-8-amino-7-oxononanoate + holo-[ACP] + CO2. Its pathway is cofactor biosynthesis; biotin biosynthesis. Catalyzes the decarboxylative condensation of pimeloyl-[acyl-carrier protein] and L-alanine to produce 8-amino-7-oxononanoate (AON), [acyl-carrier protein], and carbon dioxide. This is 8-amino-7-oxononanoate synthase from Salmonella agona (strain SL483).